A 45-amino-acid chain; its full sequence is Toxin Bcs III 15.09 (45 aa).

In terms of domain architecture, EGF-like spans 2-44; it reads QGTACTGEHAHNFCLNGGTCRHIQSLGEYYCICPEGYTGHRCE. Disulfide bonds link Cys6–Cys21, Cys15–Cys32, and Cys34–Cys43.

It localises to the secreted. It is found in the nematocyst. Functionally, has both toxic and EGF activity. The polypeptide is Toxin Bcs III 15.09 (Bunodosoma caissarum (Sea anemone)).